The primary structure comprises 449 residues: Telomere resolvase ResT (449 aa).

No cofactors were found to be necessary. serves as cofactor.

Its subcellular location is the cytoplasm. It localises to the nucleoid. In terms of biological role, catalyzes the conservative, sequence-specific DNA breakage and reunion reaction that generates two hairpin telomeres from a replicated telomere substrate. Breaks two phosphodiester bonds in a single DNA duplex and joins each end with the opposite DNA strand to form covalently closed hairpin telomeres. In vitro relaxed-circular, open-circular and linearized plasmids, but not supercoiled DNA, are all substrates. Cleavage is position-dependent relative to conserved sequence elements. The sequence is that of Telomere resolvase ResT from Borreliella burgdorferi (strain ATCC 35210 / DSM 4680 / CIP 102532 / B31) (Borrelia burgdorferi).